The following is a 444-amino-acid chain: Mitogen-activated protein kinase HOG1 (444 aa).

The Protein kinase domain occupies 22-301 (YTNLNPVGMG…AADALAHPYL (280 aa)). Residues 28 to 36 (VGMGAFGLV) and lysine 51 contribute to the ATP site. Catalysis depends on aspartate 143, which acts as the Proton acceptor. A Phosphothreonine modification is found at threonine 173. The TXY motif lies at 173–175 (TGY). At tyrosine 175 the chain carries Phosphotyrosine. A compositionally biased stretch (low complexity) spans 371–393 (ASKQQQQQQHQTEEQTQQTIAST). The segment at 371 to 444 (ASKQQQQQQH…QADQYVSKFK (74 aa)) is disordered. Positions 394 to 405 (PPQAQVTPQQLE) are enriched in polar residues. Residues 406-419 (SGANSNSNSNPSFS) show a composition bias toward low complexity. Residues 427–438 (ETLTNFANQADQ) are compositionally biased toward polar residues.

It belongs to the protein kinase superfamily. Ser/Thr protein kinase family. MAP kinase subfamily. HOG1 sub-subfamily. Requires Mg(2+) as cofactor. Post-translationally, dually phosphorylated on Thr-173 and Tyr-175, which activates the enzyme.

Its subcellular location is the cytoplasm. The protein localises to the nucleus. The catalysed reaction is L-seryl-[protein] + ATP = O-phospho-L-seryl-[protein] + ADP + H(+). The enzyme catalyses L-threonyl-[protein] + ATP = O-phospho-L-threonyl-[protein] + ADP + H(+). Its activity is regulated as follows. Activated by tyrosine and threonine phosphorylation. Functionally, proline-directed serine/threonine-protein kinase involved in a signal transduction pathway that is activated by changes in the osmolarity of the extracellular environment. Controls osmotic regulation of transcription of target genes. This is Mitogen-activated protein kinase HOG1 (HOG1) from Kluyveromyces lactis (strain ATCC 8585 / CBS 2359 / DSM 70799 / NBRC 1267 / NRRL Y-1140 / WM37) (Yeast).